Consider the following 347-residue polypeptide: Probable replication factor C subunit 3 (347 aa).

It belongs to the activator 1 small subunits family. As to quaternary structure, heteropentamer of various rfc subunits that forms a complex (RFC) with PCNA in the presence of ATP.

It is found in the nucleus. Functionally, the elongation of primed DNA templates by DNA polymerase delta and epsilon requires the action of the accessory proteins PCNA and activator 1. This Dictyostelium discoideum (Social amoeba) protein is Probable replication factor C subunit 3 (rfc3).